Consider the following 355-residue polypeptide: Small ribosomal subunit biogenesis GTPase RsgA 1 (355 aa).

Residues 103 to 262 (GRVADRQAIA…LIDTPGVREF (160 aa)) enclose the CP-type G domain. Residues 152 to 155 (NKAD) and 204 to 212 (GSSGVGKSS) contribute to the GTP site. The Zn(2+) site is built by C285, C290, H292, and C298.

Belongs to the TRAFAC class YlqF/YawG GTPase family. RsgA subfamily. Monomer. Associates with 30S ribosomal subunit, binds 16S rRNA. Requires Zn(2+) as cofactor.

Its subcellular location is the cytoplasm. Functionally, one of several proteins that assist in the late maturation steps of the functional core of the 30S ribosomal subunit. Helps release RbfA from mature subunits. May play a role in the assembly of ribosomal proteins into the subunit. Circularly permuted GTPase that catalyzes slow GTP hydrolysis, GTPase activity is stimulated by the 30S ribosomal subunit. This Bacteroides thetaiotaomicron (strain ATCC 29148 / DSM 2079 / JCM 5827 / CCUG 10774 / NCTC 10582 / VPI-5482 / E50) protein is Small ribosomal subunit biogenesis GTPase RsgA 1.